A 333-amino-acid polypeptide reads, in one-letter code: CMP-N-acetylneuraminate-beta-galactosamide-alpha-2,3-sialyltransferase 4 (333 aa).

Residues M1–K8 lie on the Cytoplasmic side of the membrane. A helical; Signal-anchor for type II membrane protein transmembrane segment spans residues L9 to S26. At R27–F333 the chain is on the lumenal side. 4 N-linked (GlcNAc...) asparagine glycosylation sites follow: N61, N131, N310, and N329. The cysteines at positions 120 and 273 are disulfide-linked.

This sequence belongs to the glycosyltransferase 29 family. As to expression, broadly expressed among tissues with highest levels in the small intestine and colon.

The protein localises to the golgi apparatus. It is found in the golgi stack membrane. The enzyme catalyses a beta-D-galactosyl-(1-&gt;3)-N-acetyl-beta-D-galactosaminyl derivative + CMP-N-acetyl-beta-neuraminate = an N-acetyl-alpha-neuraminyl-(2-&gt;3)-beta-D-galactosyl-(1-&gt;3)-N-acetyl-beta-D-galactosaminyl derivative + CMP + H(+). It carries out the reaction a beta-D-galactosyl-(1-&gt;3)-N-acetyl-alpha-D-galactosaminyl derivative + CMP-N-acetyl-beta-neuraminate = an N-acetyl-alpha-neuraminyl-(2-&gt;3)-beta-D-galactosyl-(1-&gt;3)-N-acetyl-alpha-D-galactosaminyl derivative + CMP + H(+). It catalyses the reaction a beta-D-galactosyl-(1-&gt;4)-N-acetyl-beta-D-glucosaminyl derivative + CMP-N-acetyl-beta-neuraminate = an N-acetyl-alpha-neuraminyl-(2-&gt;3)-beta-D-galactosyl-(1-&gt;4)-N-acetyl-beta-D-glucosaminyl derivative + CMP + H(+). The catalysed reaction is a ganglioside GM1 (d18:1(4E)) + CMP-N-acetyl-beta-neuraminate = a ganglioside GD1a (d18:1(4E)) + CMP + H(+). The enzyme catalyses a ganglioside GA1 (d18:1(4E)) + CMP-N-acetyl-beta-neuraminate = a ganglioside GM1b (d18:1(4E)) + CMP + H(+). It carries out the reaction a ganglioside GT1c (d18:1(4E)) + CMP-N-acetyl-beta-neuraminate = a ganglioside GQ1c (d18:1(4E)) + CMP + H(+). It catalyses the reaction a neolactoside nLc4Cer + CMP-N-acetyl-beta-neuraminate = a neolactoside IV(3)-alpha-NeuAc-nLc4Cer + CMP + H(+). The catalysed reaction is a neolactoside nLc4Cer(d18:1(4E)) + CMP-N-acetyl-beta-neuraminate = a neolactoside IV(3)-alpha-NeuAc-nLc4Cer(d18:1(4E)) + CMP + H(+). The protein operates within protein modification; protein glycosylation. Functionally, a beta-galactoside alpha2-3 sialyltransferase involved in terminal sialylation of glycoproteins and glycolipids. Catalyzes the transfer of sialic acid (N-acetyl-neuraminic acid; Neu5Ac) from the nucleotide sugar donor CMP-Neu5Ac onto acceptor Galbeta-(1-&gt;3)-GalNAc- and Galbeta-(1-&gt;4)-GlcNAc-terminated glycoconjugates through an alpha2-3 linkage. Plays a major role in hemostasis. Responsible for sialylation of plasma VWF/von Willebrand factor, preventing its recognition by asialoglycoprotein receptors (ASGPR) and subsequent clearance. Regulates ASGPR-mediated clearance of platelets. Participates in the biosynthesis of the sialyl Lewis X epitopes, both on O- and N-glycans, which are recognized by SELE/E-selectin, SELP/P-selectin and SELL/L-selectin. Essential for selectin-mediated rolling and adhesion of leukocytes during extravasation. Contributes to adhesion and transendothelial migration of neutrophils likely through terminal sialylation of CXCR2. In glycosphingolipid biosynthesis, sialylates GM1 and GA1 gangliosides to form GD1a and GM1b, respectively. Metabolizes brain c-series ganglioside GT1c forming GQ1c. Synthesizes ganglioside LM1 (IV3Neu5Ac-nLc4Cer), a major structural component of peripheral nerve myelin. This chain is CMP-N-acetylneuraminate-beta-galactosamide-alpha-2,3-sialyltransferase 4 (St3gal4), found in Mus musculus (Mouse).